The following is an 88-amino-acid chain: UPF0223 protein RBAM_014500 (88 aa).

This sequence belongs to the UPF0223 family.

The polypeptide is UPF0223 protein RBAM_014500 (Bacillus velezensis (strain DSM 23117 / BGSC 10A6 / LMG 26770 / FZB42) (Bacillus amyloliquefaciens subsp. plantarum)).